The sequence spans 400 residues: MVRPLNPRPLPPVVLMLLLLLPPSPLPLAAGDPLPTESRLMNSCLQARRKCQADPTCSAAYHHLDSCTSSISTPLPSEEPSVPADCLEAAQQLRNSSLIGCMCHRRMKNQVACLDIYWTVHRARSLGNYELDVSPYEDTVTSKPWKMNLSKLNMLKPDSDLCLKFAMLCTLNDKCDRLRKAYGEACSGPHCQRHVCLRQLLTFFEKAAEPHAQGLLLCPCAPNDRGCGERRRNTIAPNCALPPVAPNCLELRRLCFSDPLCRSRLVDFQTHCHPMDILGTCATEQSRCLRAYLGLIGTAMTPNFVSNVNTSVALSCTCRGSGNLQEECEMLEGFFSHNPCLTEAIAAKMRFHSQLFSQDWPHPTFAVMAHQNENPAVRPQPWVPSLFSCTLPLILLLSLW.

The first 31 residues, Met1 to Gly31, serve as a signal peptide directing secretion. Cys51 and Cys57 form a disulfide bridge. Asn95 and Asn148 each carry an N-linked (GlcNAc...) asparagine glycan. Intrachain disulfides connect Cys162–Cys218, Cys169–Cys175, Cys186–Cys196, Cys191–Cys239, Cys220–Cys227, Cys248–Cys316, Cys255–Cys261, Cys272–Cys288, Cys281–Cys340, and Cys318–Cys328. N-linked (GlcNAc...) asparagine glycosylation occurs at Asn309. Residue Asn374 is the site of GPI-anchor amidated asparagine attachment. Positions Pro375 to Trp400 are cleaved as a propeptide — removed in mature form.

This sequence belongs to the GDNFR family. In terms of assembly, interacts with ARTN ligand and RET: forms a 2:2:2 ternary complex composed of ARTN ligand, GFRA3 and RET receptor. Interacts with SORL1. Post-translationally, N-glycosylated. Widely expressed in adult and fetus which exhibit a similar pattern. Essentially not expressed in the central nervous system, but highly expressed in several sensory and sympathetic ganglia of the peripheral nervous system. Moderate expression in many non-neuronal tissues, particularly those of the digestive and urogenital systems, but high expression in stomach and appendix. Several types of glandular tissues show low expression. Very low or no expression detected in the hematopoietic system.

It is found in the cell membrane. Its function is as follows. Receptor for artemin (ARTN), a growth factor that supports the survival of sensory and sympathetic peripheral neurons. ARTN-binding leads to autophosphorylation and activation of the RET receptor. The sequence is that of GDNF family receptor alpha-3 (GFRA3) from Homo sapiens (Human).